A 1032-amino-acid polypeptide reads, in one-letter code: Calmodulin-binding transcription activator 3 (1032 aa).

Positions valine 15–serine 141 form a DNA-binding region, CG-1. Residues arginine 146–histidine 197 form a disordered region. A compositionally biased stretch (polar residues) spans cysteine 174–glycine 195. The residue at position 272 (serine 272) is a Phosphoserine. ANK repeat units lie at residues glycine 661–phenylalanine 690, asparagine 694–threonine 723, and serine 733–valine 762. IQ domains are found at residues valine 852–lysine 881 and threonine 875–valine 904. The segment at tryptophan 900–phenylalanine 922 is calmodulin-binding. Residues lysine 945–glutamate 987 adopt a coiled-coil conformation. Serine 964 bears the Phosphoserine mark.

This sequence belongs to the CAMTA family. Interacts with SR1IP1. Interacts with DSC1. In terms of processing, ubiquinated during pathogen infection. Ubiquitination leads to its subsequent proteasome-dependent degradation, thus allowing the establishment of plant defense response. In terms of tissue distribution, expressed in roots, stems, leaves, carpels, and siliques, but not in stigmas or other parts of the flower.

Its subcellular location is the nucleus. In terms of biological role, transcription activator that binds to the DNA consensus sequence 5'-[ACG]CGCG[GTC]-3'. Binds calmodulin in a calcium-dependent manner in vitro. Regulates transcriptional activity in response to calcium signals. Involved in freezing tolerance in association with CAMTA1 and CAMTA2. Required for the cold-induced expression of DREB1B/CBF1, DREB1C/CBF2, ZAT12 and GOLS3. Involved in response to cold. Contributes together with CAMTA5 to the positive regulation of the cold-induced expression of DREB1A/CBF3, DREB1B/CBF1 and DREB1C/CBF2. Involved together with CAMTA2 and CAMTA4 in the positive regulation of a general stress response (GSR). Involved in the regulation of GSR amplitude downstream of MEKK1. Involved in the regulation of a set of genes involved in defense responses against pathogens. Involved in the regulation of both basal resistance and systemic acquired resistance (SAR). Acts as negative regulator of plant immunity. Binds to the promoter of the defense-related gene EDS1 and represses its expression. Binds to the promoter of the defense-related gene NDR1 and represses its expression. Involved in defense against insects. Required for tolerance to the generalist herbivore Trichoplusia ni, and contributes to the positive regulation of genes associated with glucosinolate metabolism. Required for tolerance to Bradysia impatiens larvae. Mediates herbivore-induced wound response. Required for wound-induced jasmonate accumulation. Involved in the regulation of ethylene-induced senescence by binding to the promoter of the senescence-inducer gene EIN3 and repressing its expression. The sequence is that of Calmodulin-binding transcription activator 3 from Arabidopsis thaliana (Mouse-ear cress).